The primary structure comprises 497 residues: Cytochrome P450 71A12 (497 aa).

A helical membrane pass occupies residues 4 to 24; sequence ILMVSLCLTTLITLFLLKQFL. Residue cysteine 439 participates in heme binding.

This sequence belongs to the cytochrome P450 family. It depends on heme as a cofactor.

Its subcellular location is the membrane. Converts indole-3-acetaldoxime to indole cyanohydrin. Involved in the biosynthetic pathway to 4-hydroxyindole-3-carbonyl nitrile (4-OH-ICN), a cyanogenic metabolite required for inducible pathogen defense. The polypeptide is Cytochrome P450 71A12 (CYP71A12) (Arabidopsis thaliana (Mouse-ear cress)).